Consider the following 293-residue polypeptide: MATATTTLHSTTGTVYVADGTTDGKVGYYNHTDDSTNVIRKPIPIEVEDARTLSKSPTTKAEGYQLVNFHTKIPEEHFLNSKLPENKELIEEVYFDECRRLVQEVTGAAEAYPYVYRVRNQEQNAKESNKSNFHTDFVPIVHVDRDDVTAPQRLRASLGAEKADMLLSKYKSYGSINVWRPVKNMVQKWPLMLVDHKSIEDWDYSTHMFTLHSSNDERVATRGAKEHETILTHDKRYRYIYASDMTPEEAWLFFAFHSDPALGIPHGAFWDDSTKEEALTRCSIEVRIWVFFD.

It belongs to the asaB hydroxylase/desaturase family.

Its pathway is secondary metabolite biosynthesis. Its function is as follows. Oxidoreductase; part of the gene cluster that mediates the biosynthesis of squalestatin S1 (SQS1, also known as zaragozic acid A), a heavily oxidized fungal polyketide that offers potent cholesterol lowering activity by targeting squalene synthase (SS). SQS1 is composed of a 2,8-dioxobicyclic[3.2.1]octane-3,4,5-tricarboxyclic acid core that is connected to two lipophilic polyketide arms. These initial steps feature the priming of an unusual benzoic acid starter unit onto the highly reducing polyketide synthase pks2, followed by oxaloacetate extension and product release to generate a tricarboxylic acid containing product. The phenylalanine ammonia lyase (PAL) M7 and the acyl-CoA ligase M9 are involved in transforming phenylalanine into benzoyl-CoA. The citrate synthase-like protein R3 is involved in connecting the C-alpha-carbons of the hexaketide chain and oxaloacetate to afford the tricarboxylic acid unit. The potential hydrolytic enzymes, M8 and M10, are in close proximity to pks2 and may participate in product release. On the other side, the tetraketide arm is synthesized by a the squalestatin tetraketide synthase pks1 and enzymatically esterified to the core in the last biosynthetic step, by the acetyltransferase M4. The biosynthesis of the tetraketide must involve 3 rounds of chain extension. After the first and second rounds methyl-transfer occurs, and in all rounds of extension the ketoreductase and dehydratase are active. The enoyl reductase and C-MeT of pks1 are not active in the final round of extension. The acetyltransferase M4 appears to have a broad substrate selectivity for its acyl CoA substrate, allowing the in vitro synthesis of novel squalestatins. The biosynthesis of SQS1 requires several oxidative steps likely performed by oxidoreductases M1, R1 and R2. Finally, in support of the identification of the cluster as being responsible for SQS1 production, the cluster contains a gene encoding a putative squalene synthase (SS) R6, suggesting a likely mechanism for self-resistance. This Phoma sp. (strain ATCC 20986 / MF5453) protein is Oxidoreductase R2.